The sequence spans 244 residues: Putative lipoprotein LprA (244 aa).

Positions Met1–Gly24 are cleaved as a signal peptide. A lipid anchor (N-palmitoyl cysteine) is attached at Cys25. The S-diacylglycerol cysteine moiety is linked to residue Cys25.

The protein belongs to the LppX/LprAFG lipoprotein family.

The protein localises to the cell membrane. This chain is Putative lipoprotein LprA (lprA), found in Mycobacterium bovis (strain ATCC BAA-935 / AF2122/97).